Here is a 194-residue protein sequence, read N- to C-terminus: Holliday junction branch migration complex subunit RuvA (194 aa).

The domain I stretch occupies residues 1–64; it reads MIGRLRGILA…EDSVSLYGFL (64 aa). The tract at residues 65–140 is domain II; it reads REGERRLFRD…RAADFSSGAP (76 aa). The flexible linker stretch occupies residues 140–144; the sequence is PITGQ. Positions 145 to 194 are domain III; sequence LGPDAVSEATVALQQLGYKPAEAARMAREAGAEGDEVATVIRKALQAALR.

Belongs to the RuvA family. As to quaternary structure, homotetramer. Forms an RuvA(8)-RuvB(12)-Holliday junction (HJ) complex. HJ DNA is sandwiched between 2 RuvA tetramers; dsDNA enters through RuvA and exits via RuvB. An RuvB hexamer assembles on each DNA strand where it exits the tetramer. Each RuvB hexamer is contacted by two RuvA subunits (via domain III) on 2 adjacent RuvB subunits; this complex drives branch migration. In the full resolvosome a probable DNA-RuvA(4)-RuvB(12)-RuvC(2) complex forms which resolves the HJ.

The protein resides in the cytoplasm. The RuvA-RuvB-RuvC complex processes Holliday junction (HJ) DNA during genetic recombination and DNA repair, while the RuvA-RuvB complex plays an important role in the rescue of blocked DNA replication forks via replication fork reversal (RFR). RuvA specifically binds to HJ cruciform DNA, conferring on it an open structure. The RuvB hexamer acts as an ATP-dependent pump, pulling dsDNA into and through the RuvAB complex. HJ branch migration allows RuvC to scan DNA until it finds its consensus sequence, where it cleaves and resolves the cruciform DNA. The polypeptide is Holliday junction branch migration complex subunit RuvA (Xanthomonas campestris pv. campestris (strain 8004)).